The primary structure comprises 496 residues: COP9 signalosome complex subunit 3 (496 aa).

The region spanning 243–411 (QASHCLGIVI…GNETTTMLRF (169 aa)) is the PCI domain. The disordered stretch occupies residues 468 to 496 (GSSERSGVVGSTEADGGGDLDEDLMGDGR). Residues 483 to 496 (GGGDLDEDLMGDGR) are compositionally biased toward acidic residues.

The protein belongs to the CSN3 family. In terms of assembly, component of the COP9 signalosome (CSN) complex.

The protein resides in the cytoplasm. It is found in the nucleus. In terms of biological role, component of the COP9 signalosome (CSN) complex that acts as an regulator of the ubiquitin (Ubl) conjugation pathway by mediating the deneddylation of the cullin subunit of SCF-type E3 ubiquitin-protein ligase complexes. The CSN complex seems to link protein degradation to sexual development. This chain is COP9 signalosome complex subunit 3 (csnC), found in Emericella nidulans (strain FGSC A4 / ATCC 38163 / CBS 112.46 / NRRL 194 / M139) (Aspergillus nidulans).